The chain runs to 262 residues: Nitrilase (262 aa).

Positions 2–237 (VKVAYVQMNP…EEVGVAEIDL (236 aa)) constitute a CN hydrolase domain. Residue Glu-42 is the Proton acceptor of the active site. Lys-113 functions as the Proton donor in the catalytic mechanism. The active-site Nucleophile is Cys-146. 173 to 174 (VM) is a substrate binding site.

It belongs to the carbon-nitrogen hydrolase superfamily. As to quaternary structure, homodimer.

The enzyme catalyses a nitrile + 2 H2O = a carboxylate + NH4(+). With respect to regulation, enzymatic activity is inhibited in the presence of acetone, methanol and metal ions such as Ag(2+) and Hg(2+). Is also inhibited by various thiol reagents such as DTNB, p-chloromercuribenzoate, p-hydroxymercuribenzoate, iodacetamide and iodacetate. EDTA has no influence on activity. In terms of biological role, nitrilase that hydrolyzes preferentially aliphatic nitriles like malononitrile and fumaronitrile in vitro. These dinitriles are converted to the corresponding monoacid mononitriles, showing the enzyme is regioselective. Cannot hydrolyze compounds with a nitrile group bound to an aromatic ring or amino acid. Its biological role is unknown. In Pyrococcus abyssi (strain GE5 / Orsay), this protein is Nitrilase.